A 286-amino-acid chain; its full sequence is Diaminopimelate epimerase (286 aa).

Substrate is bound by residues N12 and N67. C76 (proton donor) is an active-site residue. Residues G77 to N78, N165, N198, and E216 to R217 contribute to the substrate site. The active-site Proton acceptor is C225. Substrate is bound at residue G226 to T227.

It belongs to the diaminopimelate epimerase family. Homodimer.

The protein localises to the cytoplasm. The catalysed reaction is (2S,6S)-2,6-diaminopimelate = meso-2,6-diaminopimelate. It functions in the pathway amino-acid biosynthesis; L-lysine biosynthesis via DAP pathway; DL-2,6-diaminopimelate from LL-2,6-diaminopimelate: step 1/1. Catalyzes the stereoinversion of LL-2,6-diaminopimelate (L,L-DAP) to meso-diaminopimelate (meso-DAP), a precursor of L-lysine. The chain is Diaminopimelate epimerase from Methanothermobacter thermautotrophicus (strain ATCC 29096 / DSM 1053 / JCM 10044 / NBRC 100330 / Delta H) (Methanobacterium thermoautotrophicum).